Here is a 253-residue protein sequence, read N- to C-terminus: Trans-aconitate 2-methyltransferase (253 aa).

The protein belongs to the methyltransferase superfamily. Tam family.

The protein resides in the cytoplasm. The enzyme catalyses trans-aconitate + S-adenosyl-L-methionine = (E)-3-(methoxycarbonyl)pent-2-enedioate + S-adenosyl-L-homocysteine. Functionally, catalyzes the S-adenosylmethionine monomethyl esterification of trans-aconitate. This chain is Trans-aconitate 2-methyltransferase, found in Azoarcus sp. (strain BH72).